The sequence spans 201 residues: Holliday junction resolvase RecU (201 aa).

4 residues coordinate Mg(2+): Thr87, Asp89, Glu102, and Gln121.

It belongs to the RecU family. Requires Mg(2+) as cofactor.

It is found in the cytoplasm. It catalyses the reaction Endonucleolytic cleavage at a junction such as a reciprocal single-stranded crossover between two homologous DNA duplexes (Holliday junction).. In terms of biological role, endonuclease that resolves Holliday junction intermediates in genetic recombination. Cleaves mobile four-strand junctions by introducing symmetrical nicks in paired strands. Promotes annealing of linear ssDNA with homologous dsDNA. Required for DNA repair, homologous recombination and chromosome segregation. The sequence is that of Holliday junction resolvase RecU from Listeria monocytogenes serotype 4b (strain F2365).